We begin with the raw amino-acid sequence, 282 residues long: Shikimate dehydrogenase (NADP(+)) (282 aa).

Residues 16 to 18 and Thr-63 contribute to the shikimate site; that span reads SLS. Catalysis depends on Lys-67, which acts as the Proton acceptor. Positions 88 and 103 each coordinate shikimate. NADP(+) contacts are provided by residues 128–132 and Gly-243; that span reads GAGGA.

This sequence belongs to the shikimate dehydrogenase family. Homodimer.

The enzyme catalyses shikimate + NADP(+) = 3-dehydroshikimate + NADPH + H(+). Its pathway is metabolic intermediate biosynthesis; chorismate biosynthesis; chorismate from D-erythrose 4-phosphate and phosphoenolpyruvate: step 4/7. In terms of biological role, involved in the biosynthesis of the chorismate, which leads to the biosynthesis of aromatic amino acids. Catalyzes the reversible NADPH linked reduction of 3-dehydroshikimate (DHSA) to yield shikimate (SA). The sequence is that of Shikimate dehydrogenase (NADP(+)) from Xylella fastidiosa (strain Temecula1 / ATCC 700964).